The primary structure comprises 136 residues: Psoriasis susceptibility 1 candidate gene 2 protein (136 aa).

The first 22 residues, 1–22 (MILNWKLLGILVLCLHTRGISG), serve as a signal peptide directing secretion. The segment at 20–136 (ISGSEGHPSH…DLDPPREEYR (117 aa)) is disordered. 2 stretches are compositionally biased toward pro residues: residues 44–69 (PQGPPVPGDPWPGAPPLFEDPPPTRP) and 84–116 (PEPPRTDPPQPPRPDDPWPAGPQPPENPWPPAP). Over residues 118–136 (VDNRPQEEPDLDPPREEYR) the composition is skewed to basic and acidic residues.

Expressed in skin. Also expressed in heart and skeletal muscle.

The protein resides in the secreted. This chain is Psoriasis susceptibility 1 candidate gene 2 protein (PSORS1C2), found in Homo sapiens (Human).